We begin with the raw amino-acid sequence, 270 residues long: Formamidopyrimidine-DNA glycosylase (270 aa).

The Schiff-base intermediate with DNA role is filled by Pro2. Glu3 serves as the catalytic Proton donor. The active-site Proton donor; for beta-elimination activity is Lys58. DNA-binding residues include His90, Arg109, and Arg152. The segment at 237 to 270 (RVYGREGEPCQCGGVVKRIVQGGRSTFFCPRCQK) adopts an FPG-type zinc-finger fold. Arg260 acts as the Proton donor; for delta-elimination activity in catalysis.

Belongs to the FPG family. In terms of assembly, monomer. Zn(2+) is required as a cofactor.

It carries out the reaction Hydrolysis of DNA containing ring-opened 7-methylguanine residues, releasing 2,6-diamino-4-hydroxy-5-(N-methyl)formamidopyrimidine.. The enzyme catalyses 2'-deoxyribonucleotide-(2'-deoxyribose 5'-phosphate)-2'-deoxyribonucleotide-DNA = a 3'-end 2'-deoxyribonucleotide-(2,3-dehydro-2,3-deoxyribose 5'-phosphate)-DNA + a 5'-end 5'-phospho-2'-deoxyribonucleoside-DNA + H(+). Involved in base excision repair of DNA damaged by oxidation or by mutagenic agents. Acts as a DNA glycosylase that recognizes and removes damaged bases. Has a preference for oxidized purines, such as 7,8-dihydro-8-oxoguanine (8-oxoG). Has AP (apurinic/apyrimidinic) lyase activity and introduces nicks in the DNA strand. Cleaves the DNA backbone by beta-delta elimination to generate a single-strand break at the site of the removed base with both 3'- and 5'-phosphates. This Novosphingobium aromaticivorans (strain ATCC 700278 / DSM 12444 / CCUG 56034 / CIP 105152 / NBRC 16084 / F199) protein is Formamidopyrimidine-DNA glycosylase.